The following is a 502-amino-acid chain: MGKVAVATTVVCSVAVCAAAALIVRRRMKSAGKWARVIEILKAFEEDCATPIAKLRQVADAMTVEMHAGLASEGGSKLKMLISYVDNLPSGDETGFFYALDLGGTNFRVMRVLLGGKHDRVVKREFKEESIPPHLMTGKSHELFDFIVDVLAKFVATEGEDFHLPPGRQRELGFTFSFPVKQLSLSSGTLINWTKGFSIDDTVDKDVVGELVKAMERVGLDMLVAALVNDTIGTLAGGRYTNPDVVVAVILGTGTNAAYVERAHAIPKWHGLLPKSGEMVINMEWGNFRSSHLPLTEYDHSLDVDSLNPGEQILEKIISGMYLGEILRRVLLKMAEEAAFFGDIVPPKLKIPFIIRTPNMSAMHSDTSPDLKVVGSKLKDILEVQTSSLKMRKVVISLCNIIASRGARLSAAGIYGILKKIGRDATKDGEAQKSVIAMDGGLFEHYTQFSESMKSSLKELLGDEVSESVEVILSNDGSGVGAALLAASHSQYLELEDDSETS.

A helical membrane pass occupies residues 4 to 24 (VAVATTVVCSVAVCAAAALIV). The Hexokinase domain occupies 35-487 (ARVIEILKAF…SGVGAALLAA (453 aa)). A hexokinase small subdomain region spans residues 90–228 (SGDETGFFYA…GLDMLVAALV (139 aa)). 3 residues coordinate ADP: G104, T105, and N106. D-glucose-binding residues include T194, K195, N229, and D230. The tract at residues 229 to 476 (NDTIGTLAGG…ESVEVILSND (248 aa)) is hexokinase large subdomain. Residue T253 coordinates ADP. Residues N256, E284, and E315 each coordinate D-glucose. ADP is bound at residue G441.

Belongs to the hexokinase family. In terms of tissue distribution, highly expressed in siliques, at intermediate levels in roots and flowers, and at lower levels in stems, rosette and cauline leaves.

It is found in the mitochondrion outer membrane. The catalysed reaction is a D-hexose + ATP = a D-hexose 6-phosphate + ADP + H(+). It catalyses the reaction D-fructose + ATP = D-fructose 6-phosphate + ADP + H(+). It carries out the reaction D-glucose + ATP = D-glucose 6-phosphate + ADP + H(+). It participates in carbohydrate metabolism; hexose metabolism. It functions in the pathway carbohydrate degradation; glycolysis; D-glyceraldehyde 3-phosphate and glycerone phosphate from D-glucose: step 1/4. Functionally, fructose and glucose phosphorylating enzyme. May be involved in the phosphorylation of glucose during the export from mitochondrion to cytosol. Acts as a sugar sensor which may regulate sugar-dependent gene repression or activation. Mediates the effects of sugar on plant growth and development independently of its catalytic activity or the sugar metabolism. May regulate the execution of program cell death in plant cells. In Arabidopsis thaliana (Mouse-ear cress), this protein is Hexokinase-2 (HXK2).